The sequence spans 685 residues: Protein OCTOPUS (685 aa).

Disordered regions lie at residues 1–34 (MNPA…CNRH), 152–202 (RNLP…DYVE), and 280–314 (KWRQ…RQLR). Positions 179–202 (VNDEGEAESDDEELEEEEEEDYVE) are enriched in acidic residues. Residues 280–291 (KWRQNQKMKKRR) show a composition bias toward basic residues. Residues 292 to 314 (NGGDHRPGSARLPVEKPIGRQLR) are compositionally biased toward basic and acidic residues. Ser-318 carries the phosphoserine modification. The tract at residues 419–471 (VEEPAPPPPVVNQTNGVSDPVIIPGGSIQTRDYYTDSSSRRRKSLDRSSSSMR) is disordered. Residues 549 to 578 (LIYRKSVNKYEEEEEEEEDRYRRLNGGMVE) are a coiled coil. Positions 584-640 (SWPELRNGGGGGGGPRMVRSNSNVSWRSSGGGSARKVNGLDRRNKSSRYSPKNGENG) are disordered. Positions 601–611 (VRSNSNVSWRS) are enriched in low complexity.

This sequence belongs to the OCTOPUS family. In terms of assembly, interacts with VCC. Phosphorylation at Ser-318 amplifies the promotion of protophloem differentiation. In terms of tissue distribution, expressed in provascular cells and phloem initials (e.g. protophloem, metaphloem, sieve element precursor cells and sieve element procambium precursor cells).

It is found in the cell membrane. The protein resides in the cytoplasm. Potentiates primary root protophloem differentiation. Required, together with VCC, for embryo provasculature development and cotyledon vascular complexity and connectivity. Regulates roots architecture. Mediates the recruitment of ASK7/BIN2 to the plasma membrane. The protein is Protein OCTOPUS of Arabidopsis thaliana (Mouse-ear cress).